Consider the following 498-residue polypeptide: ATP synthase subunit beta, chloroplastic (498 aa).

Position 172–179 (G172–T179) interacts with ATP.

The protein belongs to the ATPase alpha/beta chains family. As to quaternary structure, F-type ATPases have 2 components, CF(1) - the catalytic core - and CF(0) - the membrane proton channel. CF(1) has five subunits: alpha(3), beta(3), gamma(1), delta(1), epsilon(1). CF(0) has four main subunits: a(1), b(1), b'(1) and c(9-12).

It is found in the plastid. The protein localises to the chloroplast thylakoid membrane. The catalysed reaction is ATP + H2O + 4 H(+)(in) = ADP + phosphate + 5 H(+)(out). Functionally, produces ATP from ADP in the presence of a proton gradient across the membrane. The catalytic sites are hosted primarily by the beta subunits. The polypeptide is ATP synthase subunit beta, chloroplastic (Castanea sativa (Sweet chestnut)).